The following is a 247-amino-acid chain: GTP cyclohydrolase 1 type 2 homolog (247 aa).

5 residues coordinate a divalent metal cation: histidine 63, histidine 64, aspartate 101, histidine 215, and glutamate 219.

It belongs to the GTP cyclohydrolase I type 2/NIF3 family. In terms of assembly, homohexamer.

This Buchnera aphidicola subsp. Baizongia pistaciae (strain Bp) protein is GTP cyclohydrolase 1 type 2 homolog.